The primary structure comprises 400 residues: Transposase for insertion sequence element ISRM3 (400 aa).

This sequence belongs to the transposase mutator family.

Functionally, required for the transposition of the insertion element. This chain is Transposase for insertion sequence element ISRM3, found in Rhizobium meliloti (strain 1021) (Ensifer meliloti).